The chain runs to 65 residues: Large ribosomal subunit protein bL35 (65 aa).

It belongs to the bacterial ribosomal protein bL35 family.

The protein is Large ribosomal subunit protein bL35 of Porphyromonas gingivalis (strain ATCC 33277 / DSM 20709 / CIP 103683 / JCM 12257 / NCTC 11834 / 2561).